The following is a 461-amino-acid chain: Phosphomethylpyrimidine synthase (461 aa).

Residues Asn80, Met109, Tyr138, His173, 193–195, 234–237, and Glu273 contribute to the substrate site; these read SRG and DGLR. Position 277 (His277) interacts with Zn(2+). Tyr300 provides a ligand contact to substrate. Position 341 (His341) interacts with Zn(2+). [4Fe-4S] cluster is bound by residues Cys421, Cys424, and Cys429.

Belongs to the ThiC family. The cofactor is [4Fe-4S] cluster.

The catalysed reaction is 5-amino-1-(5-phospho-beta-D-ribosyl)imidazole + S-adenosyl-L-methionine = 4-amino-2-methyl-5-(phosphooxymethyl)pyrimidine + CO + 5'-deoxyadenosine + formate + L-methionine + 3 H(+). It participates in cofactor biosynthesis; thiamine diphosphate biosynthesis. Functionally, catalyzes the synthesis of the hydroxymethylpyrimidine phosphate (HMP-P) moiety of thiamine from aminoimidazole ribotide (AIR) in a radical S-adenosyl-L-methionine (SAM)-dependent reaction. The polypeptide is Phosphomethylpyrimidine synthase (Solibacter usitatus (strain Ellin6076)).